Here is a 223-residue protein sequence, read N- to C-terminus: Protein-disulfide oxidoreductase DsbI (223 aa).

Residues 26–46 traverse the membrane as a helical segment; it reads LLWLLMAVAMGALIILAHSFF. Cysteines 55 and 58 form a disulfide. 2 helical membrane-spanning segments follow: residues 59–78 and 82–102; these read VYIRYAMFVMVIGGLVAAIN and IILKLIGCVMAFYGSILGLKF. A disulfide bond links Cys127 and Cys153. The chain crosses the membrane as a helical span at residues 198-218; sequence CMLAFGMCLVLLVIMSGAWAL.

It belongs to the DsbB family. DsbI subfamily. In terms of assembly, interacts with DsbL.

Its subcellular location is the cell inner membrane. Its function is as follows. Required for disulfide bond formation in some proteins. Part of a redox system composed of DsbI and DsbL that mediates formation of an essential disulfide bond in AssT. This is Protein-disulfide oxidoreductase DsbI from Escherichia coli O1:K1 / APEC.